Consider the following 493-residue polypeptide: Dynein regulatory complex subunit 2 (493 aa).

2 coiled-coil regions span residues 99–163 and 253–280; these read DSVI…RKLI and KDEK…ILKG.

It belongs to the DRC2 family. In terms of assembly, component of the nexin-dynein regulatory complex (N-DRC). Interacts with DRC1.

The protein localises to the cytoplasm. It localises to the cytoskeleton. The protein resides in the flagellum basal body. It is found in the cell projection. Its subcellular location is the cilium. The protein localises to the flagellum. It localises to the flagellum axoneme. Its function is as follows. Component of the nexin-dynein regulatory complex (N-DRC), a key regulator of ciliary/flagellar motility which maintains the alignment and integrity of the distal axoneme and regulates microtubule sliding in motile axonemes. Plays a critical role in the assembly of N-DRC and also stabilizes the assembly of multiple inner dynein arms and radial spokes. Coassembles with DRC1 to form a central scaffold needed for assembly of the N-DRC and its attachment to the outer doublet microtubules. The protein is Dynein regulatory complex subunit 2 (Ccdc65) of Mus musculus (Mouse).